The following is a 368-amino-acid chain: tRNA/tmRNA (uracil-C(5))-methyltransferase (368 aa).

Residues Gln-190, Tyr-218, Asn-223, Glu-239, and Asp-301 each contribute to the S-adenosyl-L-methionine site. Catalysis depends on Cys-326, which acts as the Nucleophile. Glu-360 functions as the Proton acceptor in the catalytic mechanism.

It belongs to the class I-like SAM-binding methyltransferase superfamily. RNA M5U methyltransferase family. TrmA subfamily.

The catalysed reaction is uridine(54) in tRNA + S-adenosyl-L-methionine = 5-methyluridine(54) in tRNA + S-adenosyl-L-homocysteine + H(+). It carries out the reaction uridine(341) in tmRNA + S-adenosyl-L-methionine = 5-methyluridine(341) in tmRNA + S-adenosyl-L-homocysteine + H(+). Dual-specificity methyltransferase that catalyzes the formation of 5-methyluridine at position 54 (m5U54) in all tRNAs, and that of position 341 (m5U341) in tmRNA (transfer-mRNA). This Aliivibrio fischeri (strain MJ11) (Vibrio fischeri) protein is tRNA/tmRNA (uracil-C(5))-methyltransferase.